A 452-amino-acid chain; its full sequence is Retinoid-inducible serine carboxypeptidase (452 aa).

An N-terminal signal peptide occupies residues 1-28 (MELSRRICLVRLWLLLLSFLLGFSAGSA). 3 N-linked (GlcNAc...) asparagine glycosylation sites follow: N64, N102, and N126. S167 is an active-site residue. Residues N192 and N362 are each glycosylated (N-linked (GlcNAc...) asparagine). Catalysis depends on residues D371 and H431.

The protein belongs to the peptidase S10 family.

It localises to the secreted. Functionally, may be involved in vascular wall and kidney homeostasis. This chain is Retinoid-inducible serine carboxypeptidase (Scpep1), found in Mus musculus (Mouse).